Consider the following 149-residue polypeptide: Cytochrome c-556 (149 aa).

An N-terminal signal peptide occupies residues M1–A20. 4 residues coordinate heme c: M32, C137, C140, and H141.

Monomer. Post-translationally, binds 1 heme c group covalently per subunit.

In terms of biological role, low-spin monoheme cytochrome c. This chain is Cytochrome c-556, found in Rhodopseudomonas palustris (strain ATCC BAA-98 / CGA009).